A 685-amino-acid chain; its full sequence is METESDDATITVVKDMRVRLENRIRTQHDAHLDLLSSLQSIVPDIVPSLDLSLKLISSFTNRPFVATPPLPEPKVEKKHHPIVKLGTQLQQLHGHDSKSMLVDSNQRDAEADGSSGSPMALVRAMVAECLLQRVPFSPTDSSTVLRKLENDQNARPAEKAALRDLGGECGPILAVETALKSMAEENGSVELEEFEVSGKPRIMVLAIDRTRLLKELPESFQGNNESNRVVETPNSIENATVSGGGFGVSGSGNFPRPEMWGGDPNMGFRPMMNAPRGMQMMGMHHPMGIMGRPPPFPLPLPLPVPSNQKLRSEEEDLKDVEALLSKKSFKEKQQSRTGEELLDLIHRPTAKEAATAAKFKSKGGSQVKYYCRYLTKEDCRLQSGSHIACNKRHFRRLIASHTDVSLGDCSFLDTCRHMKTCKYVHYELDMADAMMAGPDKALKPLRADYCSEAELGEAQWINCDIRSFRMDILGTFGVVMADPPWDIHMELPYGTMADDEMRTLNVPSLQTDGLIFLWVTGRAMELGRECLELWGYKRVEEIIWVKTNQLQRIIRTGRTGHWLNHSKEHCLVGIKGNPEVNRNIDTDVIVAEVRETSRKPDEMYAMLERIMPRARKLELFARMHNAHAGWLSLGNQLNGVRLINEGLRARFKASYPEIDVQPPSPPRASAMETDNEPMAIDSITA.

Residues 464-465 (DI) and Asp482 contribute to the S-adenosyl-L-methionine site. The tract at residues 552-565 (RIIRTGRTGHWLNH) is positively charged region required for RNA-binding. S-adenosyl-L-methionine contacts are provided by residues Lys599, 622-625 (RMHN), and 635-636 (NQ). A disordered region spans residues 657–685 (EIDVQPPSPPRASAMETDNEPMAIDSITA). Residue Ser664 is modified to Phosphoserine.

The protein belongs to the MT-A70-like family. In terms of assembly, interacts with FIP37. Interacts with MTB. Associates with MTB, FIP37, VIR and HAKAI to form the m6A writer complex which is essential for adenosine methylation at specific mRNA sequences.

It localises to the nucleus. It catalyses the reaction an adenosine in mRNA + S-adenosyl-L-methionine = an N(6)-methyladenosine in mRNA + S-adenosyl-L-homocysteine + H(+). In terms of biological role, catalytic subunit of the N6-methyltransferase complex, a multiprotein complex that mediates N6-methyladenosine (m6A) methylation at the 5'-[AG]GAC-3' consensus sites of some mRNAs. Associates with MTB, FIP37, VIR and HAKAI to form the m6A writer complex which is essential for adenosine methylation at specific mRNA sequences. N6-methyladenosine (m6A) plays a role in mRNA stability, processing, translation efficiency and editing. This is N(6)-adenosine-methyltransferase MT-A70-like from Arabidopsis thaliana (Mouse-ear cress).